Consider the following 292-residue polypeptide: 1D-myo-inositol 2-acetamido-2-deoxy-alpha-D-glucopyranoside deacetylase (292 aa).

Zn(2+) contacts are provided by histidine 12, aspartate 15, and histidine 147.

This sequence belongs to the MshB deacetylase family. Zn(2+) serves as cofactor.

It carries out the reaction 1D-myo-inositol 2-acetamido-2-deoxy-alpha-D-glucopyranoside + H2O = 1D-myo-inositol 2-amino-2-deoxy-alpha-D-glucopyranoside + acetate. Its function is as follows. Catalyzes the deacetylation of 1D-myo-inositol 2-acetamido-2-deoxy-alpha-D-glucopyranoside (GlcNAc-Ins) in the mycothiol biosynthesis pathway. In Rhodococcus opacus (strain B4), this protein is 1D-myo-inositol 2-acetamido-2-deoxy-alpha-D-glucopyranoside deacetylase.